The primary structure comprises 310 residues: Aspartate carbamoyltransferase catalytic subunit (310 aa).

R58 and T59 together coordinate carbamoyl phosphate. An L-aspartate-binding site is contributed by K86. Residues R108, H136, and Q139 each contribute to the carbamoyl phosphate site. L-aspartate is bound by residues R169 and R224. Carbamoyl phosphate is bound by residues G265 and P266.

This sequence belongs to the aspartate/ornithine carbamoyltransferase superfamily. ATCase family. As to quaternary structure, heterododecamer (2C3:3R2) of six catalytic PyrB chains organized as two trimers (C3), and six regulatory PyrI chains organized as three dimers (R2).

The enzyme catalyses carbamoyl phosphate + L-aspartate = N-carbamoyl-L-aspartate + phosphate + H(+). The protein operates within pyrimidine metabolism; UMP biosynthesis via de novo pathway; (S)-dihydroorotate from bicarbonate: step 2/3. Functionally, catalyzes the condensation of carbamoyl phosphate and aspartate to form carbamoyl aspartate and inorganic phosphate, the committed step in the de novo pyrimidine nucleotide biosynthesis pathway. This Citrifermentans bemidjiense (strain ATCC BAA-1014 / DSM 16622 / JCM 12645 / Bem) (Geobacter bemidjiensis) protein is Aspartate carbamoyltransferase catalytic subunit.